A 146-amino-acid polypeptide reads, in one-letter code: 3-dehydroquinate dehydratase (146 aa).

The active-site Proton acceptor is Tyr-22. Substrate contacts are provided by Asn-74, His-80, and Asp-87. Catalysis depends on His-100, which acts as the Proton donor. Substrate contacts are provided by residues 101–102 (LS) and Arg-111.

This sequence belongs to the type-II 3-dehydroquinase family. In terms of assembly, homododecamer.

It carries out the reaction 3-dehydroquinate = 3-dehydroshikimate + H2O. It participates in metabolic intermediate biosynthesis; chorismate biosynthesis; chorismate from D-erythrose 4-phosphate and phosphoenolpyruvate: step 3/7. Its function is as follows. Catalyzes a trans-dehydration via an enolate intermediate. In Clostridium perfringens (strain 13 / Type A), this protein is 3-dehydroquinate dehydratase.